The following is a 114-amino-acid chain: Large ribosomal subunit protein bL19 (114 aa).

It belongs to the bacterial ribosomal protein bL19 family.

In terms of biological role, this protein is located at the 30S-50S ribosomal subunit interface and may play a role in the structure and function of the aminoacyl-tRNA binding site. This is Large ribosomal subunit protein bL19 from Clavibacter sepedonicus (Clavibacter michiganensis subsp. sepedonicus).